The chain runs to 138 residues: Class I hydrophobin 1 (138 aa).

A signal peptide spans M1 to A19. Intrachain disulfides connect C45–C113, C53–C107, C54–C91, and C114–C131.

The protein belongs to the fungal hydrophobin family. As to quaternary structure, interacts with the lipid droplet coating protein Cap20.

The protein resides in the secreted. It is found in the lipid droplet. Its function is as follows. Aerial growth, conidiation, and dispersal of filamentous fungi in the environment rely upon a capability of their secreting small amphipathic proteins called hydrophobins (HPBs) with low sequence identity. Class I can self-assemble into an outermost layer of rodlet bundles on aerial cell surfaces, conferring cellular hydrophobicity that supports fungal growth, development and dispersal; whereas Class II form highly ordered films at water-air interfaces through intermolecular interactions but contribute nothing to the rodlet structure. Hydr1 is a class I hydrophobin involved in spore germination, appressorium formation, but not in the formation of the rodlet layer of conidia. Responsible for the full virulence on rubber tree leaves. This chain is Class I hydrophobin 1, found in Colletotrichum siamense (Anthracnose fungus).